Here is a 220-residue protein sequence, read N- to C-terminus: 7-cyano-7-deazaguanine synthase (220 aa).

7 to 17 contributes to the ATP binding site; sequence LSGGMDSSTLA. Zn(2+) is bound by residues C187, C195, C198, and C201.

It belongs to the QueC family. The cofactor is Zn(2+).

The enzyme catalyses 7-carboxy-7-deazaguanine + NH4(+) + ATP = 7-cyano-7-deazaguanine + ADP + phosphate + H2O + H(+). Its pathway is purine metabolism; 7-cyano-7-deazaguanine biosynthesis. Functionally, catalyzes the ATP-dependent conversion of 7-carboxy-7-deazaguanine (CDG) to 7-cyano-7-deazaguanine (preQ(0)). This Methanospirillum hungatei JF-1 (strain ATCC 27890 / DSM 864 / NBRC 100397 / JF-1) protein is 7-cyano-7-deazaguanine synthase.